The primary structure comprises 60 residues: MDHRLLEIVACPVCHGKLYYNKEQQELICKPDGLAYPVQDGIPVLLEVEARALTLEESHP.

It belongs to the UPF0434 family.

The polypeptide is UPF0434 protein ETA_21370 (Erwinia tasmaniensis (strain DSM 17950 / CFBP 7177 / CIP 109463 / NCPPB 4357 / Et1/99)).